A 360-amino-acid chain; its full sequence is Heme A synthase (360 aa).

5 helical membrane-spanning segments follow: residues 13 to 33 (AVRW…LVGG), 99 to 119 (LLGR…LWRG), 129 to 149 (LWLL…MVAS), 160 to 180 (YRLA…VWTV), and 199 to 219 (SALL…VAGL). H263 provides a ligand contact to heme. The next 3 helical transmembrane spans lie at 265–282 (MTAY…FDAV), 292–312 (GALW…LTLL), and 315–335 (VPIG…TLAV). A heme-binding site is contributed by H323.

Belongs to the COX15/CtaA family. Type 2 subfamily. As to quaternary structure, interacts with CtaB. Heme b serves as cofactor.

The protein localises to the cell membrane. The enzyme catalyses Fe(II)-heme o + 2 A + H2O = Fe(II)-heme a + 2 AH2. It participates in porphyrin-containing compound metabolism; heme A biosynthesis; heme A from heme O: step 1/1. Its function is as follows. Catalyzes the conversion of heme O to heme A by two successive hydroxylations of the methyl group at C8. The first hydroxylation forms heme I, the second hydroxylation results in an unstable dihydroxymethyl group, which spontaneously dehydrates, resulting in the formyl group of heme A. The protein is Heme A synthase of Bradyrhizobium diazoefficiens (strain JCM 10833 / BCRC 13528 / IAM 13628 / NBRC 14792 / USDA 110).